Reading from the N-terminus, the 608-residue chain is 65-kDa microtubule-associated protein 6 (608 aa).

3 coiled-coil regions span residues 164-186 (DLTLRNLNEYQTHLRTLQKEKSD), 368-388 (ELLANIEMQINKIKDEAQSRK), and 467-503 (VRLVNILEDYKLTRKQQEEEKKRYRDQKKRQDLLLTQ). Residues 501–565 (LTQRESIYGS…RSYSGHHRQN (65 aa)) are disordered. Residues 510 to 523 (SKPSPRRSSSFRKP) are compositionally biased toward low complexity. Position 513 is a phosphoserine (Ser-513). The span at 526–535 (FNISNGNGSV) shows a compositional bias: polar residues. Ser-604 carries the phosphoserine modification.

This sequence belongs to the MAP65/ASE1 family. In terms of assembly, forms a dimer. Binds to polymerized centrally located endocytic MT.

It localises to the nucleus. The protein resides in the cytoplasm. The protein localises to the mitochondrion. Its subcellular location is the cytoskeleton. It is found in the phragmoplast. Microtubule-associated protein that mediates the formation of a mesh-like stable and dense network formed by individual microtubules (MT). Confers MT resistance to high concentration of NaCl. In Arabidopsis thaliana (Mouse-ear cress), this protein is 65-kDa microtubule-associated protein 6 (MAP65-6).